A 388-amino-acid chain; its full sequence is GTPase Obg (388 aa).

One can recognise an Obg domain in the interval serine 4–leucine 162. The segment at lysine 18–glycine 45 is disordered. Gly residues predominate over residues glycine 36–glycine 45. The OBG-type G domain occupies alanine 163–asparagine 329. Residues glycine 169 to serine 176, phenylalanine 194 to glutamate 198, aspartate 216 to glycine 219, threonine 283 to aspartate 286, and serine 310 to valine 312 contribute to the GTP site. Mg(2+)-binding residues include serine 176 and threonine 196. The disordered stretch occupies residues leucine 352–lysine 388. Acidic residues predominate over residues glycine 356–lysine 388.

This sequence belongs to the TRAFAC class OBG-HflX-like GTPase superfamily. OBG GTPase family. In terms of assembly, monomer. Mg(2+) is required as a cofactor.

The protein localises to the cytoplasm. In terms of biological role, an essential GTPase which binds GTP, GDP and possibly (p)ppGpp with moderate affinity, with high nucleotide exchange rates and a fairly low GTP hydrolysis rate. Plays a role in control of the cell cycle, stress response, ribosome biogenesis and in those bacteria that undergo differentiation, in morphogenesis control. This Bacteroides fragilis (strain ATCC 25285 / DSM 2151 / CCUG 4856 / JCM 11019 / LMG 10263 / NCTC 9343 / Onslow / VPI 2553 / EN-2) protein is GTPase Obg.